The chain runs to 475 residues: Tubulin gamma chain (475 aa).

Position 142–148 (142–148 (AGGTGSG)) interacts with GTP. Residues 455-475 (GKQVSGEGNTSGTVDSRVGAS) are disordered.

Belongs to the tubulin family.

It is found in the cytoplasm. Its subcellular location is the cytoskeleton. It localises to the microtubule organizing center. Tubulin is the major constituent of microtubules. The gamma chain is found at microtubule organizing centers (MTOC) such as the spindle poles, suggesting that it is involved in the minus-end nucleation of microtubule assembly. In Physcomitrium patens (Spreading-leaved earth moss), this protein is Tubulin gamma chain (TUBG1).